Reading from the N-terminus, the 417-residue chain is SNF1 protein kinase subunit beta-3 (417 aa).

Residues 1–12 (MAGDNPENKDAS) show a composition bias toward basic and acidic residues. Residues 1 to 37 (MAGDNPENKDASMLDVSDAASNTTINGKHSADSTNEA) are disordered. Ser-12, Ser-21, Ser-44, and Ser-135 each carry phosphoserine. A compositionally biased stretch (polar residues) spans 19-37 (AASNTTINGKHSADSTNEA). Disordered regions lie at residues 64–155 (SSLI…VEGK) and 250–269 (GNEP…DDSK). Positions 118–136 (TGNTLQKMDYQPSQQPDSL) are enriched in polar residues. The segment covering 137 to 149 (QNQGFQQQQEQQQ) has biased composition (low complexity). The segment at 152 to 342 (VEGKKGRAMM…DQQQNNHQNM (191 aa)) is kinase-interacting sequence (KIS); required for interaction with SNF1. A compositionally biased stretch (basic and acidic residues) spans 257–269 (LAEKKANHVDDSK). Phosphoserine is present on residues Ser-276 and Ser-279. Residues 343–417 (AWLTPPQLPP…VTQILYTPLQ (75 aa)) form an association with SNF1 kinase complex (ASC) domain; required for interaction with SNF4 region.

This sequence belongs to the 5'-AMP-activated protein kinase beta subunit family. Component of the SNF1 kinase complex, a heterotrimeric complex composed of the catalytic alpha subunit SNF1, one of the three related beta subunits SIP1, SIP2 or GAL83, and the regulatory gamma subunit SNF4. The beta subunit serves as a bridge between the catalytic and the regulatory subunit. Interacts (via KIS domain) with SNF1. Interacts (via ASC domain) with SNF4. Interacts with REE1. In terms of processing, phosphorylated by SNF1 in vitro.

It is found in the cytoplasm. The protein localises to the nucleus. Functionally, beta subunit of the SNF1 kinase complex, which is required for transcriptional, metabolic, and developmental adaptations in response to glucose limitation. Has a structural role, mediating heterotrimer formation, and a regulatory role, defining carbon source-regulated subcellular location and substrate specificity of the SNF1 kinase complex. Promotes the relocalization of the SNF1 kinase complex to the nucleus upon shift to nonfermentable carbon sources. The protein is SNF1 protein kinase subunit beta-3 (GAL83) of Saccharomyces cerevisiae (strain ATCC 204508 / S288c) (Baker's yeast).